A 30-amino-acid chain; its full sequence is Gamma-II crystallin (30 aa).

The 30-residue stretch at 1–30 folds into the Beta/gamma crystallin 'Greek key' domain; sequence GKITFYEDRNFQGRCYECSTDCPDLSPYFS.

The protein belongs to the beta/gamma-crystallin family. In terms of assembly, monomer.

In terms of biological role, crystallins are the dominant structural components of the vertebrate eye lens. This is Gamma-II crystallin from Rhizoprionodon acutus (Milk shark).